Reading from the N-terminus, the 384-residue chain is Urea transporter 1 (384 aa).

Phosphoserine is present on glutamate 39. The next 5 membrane-spanning stretches (helical) occupy residues 61-81, 85-105, 111-131, 138-158, and 168-188; these read ISQVVFVSNPISGILILVGLL, PWWALCGCVGTVVSTLTALLL, AIAAGLQGYNATLVGILMAVF, FWWLIFPVSAMSMTCPVFSSA, and LPVFTLPFNMALSMYLSATGH. Asparagine 206 carries N-linked (GlcNAc...) asparagine glycosylation. 4 helical membrane passes run 250–270, 276–296, 305–325, and 327–347; these read LMCLHAAIGSLLGVIAGLSLA, IYFGLWGFNSSLACIAIGGMF, LLALACALFTAYFGACMAHLM, and VVHLPACTWSFCLATLLFLLL.

The protein belongs to the urea transporter family. In terms of assembly, homotrimer; each subunit contains a pore through which urea permeates. Identified in a complex with STOM. In terms of processing, N-glycosylated in red blood cells, as well as in most non-erythroid tissues, except in the gastrocnemius muscle and in the gastrointestinal tract, including liver, colon and stomach. In terms of tissue distribution, expressed in brain, kidney, heart, liver, lung, skeletal muscle, spleen, testis, ureter and urinary bladder (at protein level). Along the gastrointestinal tract, detected in colon, jejunum and stomach (at protein level). In the kidney, expressed in some microvessels of the inner and outer medulla, but not all (at protein level). Not detected in the cortex (at protein level). Detected in the urothelium all along the urinary tract, including the papilla surface, the ureter, the bladder and the urethra (at protein level). In the brain, expressed at the border of the corpus callosum and striatum in astrocytic cellular processes surrounding blood microvessels (at protein level). Detected in erythrocytes (at protein level).

Its subcellular location is the cell membrane. It is found in the basolateral cell membrane. The catalysed reaction is urea(in) = urea(out). Functionally, mediates the transport of urea driven by a concentration gradient across the cell membranes of erythrocytes and the renal inner medullary collecting duct which is critical to the urinary concentrating mechanism. Facilitates water transport in erythrocytes. This is Urea transporter 1 (Slc14a1) from Mus musculus (Mouse).